A 477-amino-acid chain; its full sequence is Adenosylhomocysteinase (477 aa).

Residues threonine 63, aspartate 142, and glutamate 202 each coordinate substrate. NAD(+) is bound at residue 203–205; the sequence is TTT. Substrate is bound by residues lysine 232 and aspartate 236. Residues asparagine 237, 266–271, glutamate 289, asparagine 324, 345–347, and asparagine 390 contribute to the NAD(+) site; these read GYGDVG and IGH.

This sequence belongs to the adenosylhomocysteinase family. Requires NAD(+) as cofactor.

It is found in the cytoplasm. The enzyme catalyses S-adenosyl-L-homocysteine + H2O = L-homocysteine + adenosine. The protein operates within amino-acid biosynthesis; L-homocysteine biosynthesis; L-homocysteine from S-adenosyl-L-homocysteine: step 1/1. May play a key role in the regulation of the intracellular concentration of adenosylhomocysteine. The sequence is that of Adenosylhomocysteinase from Methylibium petroleiphilum (strain ATCC BAA-1232 / LMG 22953 / PM1).